The following is a 430-amino-acid chain: Anaerobic glycerol-3-phosphate dehydrogenase subunit B (430 aa).

This sequence belongs to the anaerobic G-3-P dehydrogenase subunit B family. As to quaternary structure, composed of a catalytic GlpA/B dimer and of membrane bound GlpC. The cofactor is FMN.

The catalysed reaction is a quinone + sn-glycerol 3-phosphate = dihydroxyacetone phosphate + a quinol. The protein operates within polyol metabolism; glycerol degradation via glycerol kinase pathway; glycerone phosphate from sn-glycerol 3-phosphate (anaerobic route): step 1/1. Conversion of glycerol 3-phosphate to dihydroxyacetone. Uses fumarate or nitrate as electron acceptor. The sequence is that of Anaerobic glycerol-3-phosphate dehydrogenase subunit B from Actinobacillus succinogenes (strain ATCC 55618 / DSM 22257 / CCUG 43843 / 130Z).